The following is a 194-amino-acid chain: Imidazoleglycerol-phosphate dehydratase (194 aa).

The protein belongs to the imidazoleglycerol-phosphate dehydratase family.

The protein resides in the cytoplasm. The catalysed reaction is D-erythro-1-(imidazol-4-yl)glycerol 3-phosphate = 3-(imidazol-4-yl)-2-oxopropyl phosphate + H2O. Its pathway is amino-acid biosynthesis; L-histidine biosynthesis; L-histidine from 5-phospho-alpha-D-ribose 1-diphosphate: step 6/9. The chain is Imidazoleglycerol-phosphate dehydratase from Streptococcus sanguinis (strain SK36).